The chain runs to 485 residues: Inosine-5'-monophosphate dehydrogenase (485 aa).

CBS domains follow at residues 99–154 and 156–212; these read IVED…TVKE and MTRE…KNAV. Residues D247 and 294-296 each bind NAD(+); that span reads GIG. G296 and G298 together coordinate K(+). Residue S299 participates in IMP binding. C301 contributes to the K(+) binding site. C301 (thioimidate intermediate) is an active-site residue. Residues 334–336, 357–358, and 381–385 each bind IMP; these read DGG, GN, and YRGMG. The Proton acceptor role is filled by R397. E412 serves as a coordination point for IMP. K(+)-binding residues include E466, S467, and H468.

The protein belongs to the IMPDH/GMPR family. Homotetramer. It depends on K(+) as a cofactor.

It carries out the reaction IMP + NAD(+) + H2O = XMP + NADH + H(+). It participates in purine metabolism; XMP biosynthesis via de novo pathway; XMP from IMP: step 1/1. Mycophenolic acid (MPA) is a non-competitive inhibitor that prevents formation of the closed enzyme conformation by binding to the same site as the amobile flap. In contrast, mizoribine monophosphate (MZP) is a competitive inhibitor that induces the closed conformation. MPA is a potent inhibitor of mammalian IMPDHs but a poor inhibitor of the bacterial enzymes. MZP is a more potent inhibitor of bacterial IMPDH. Functionally, catalyzes the conversion of inosine 5'-phosphate (IMP) to xanthosine 5'-phosphate (XMP), the first committed and rate-limiting step in the de novo synthesis of guanine nucleotides, and therefore plays an important role in the regulation of cell growth. This chain is Inosine-5'-monophosphate dehydrogenase, found in Pyrococcus furiosus (strain ATCC 43587 / DSM 3638 / JCM 8422 / Vc1).